The chain runs to 395 residues: MAWRQLRKRALDAAIILGGGGLLFTSYLTATGDDHFYAEYLMPALQRLLDPESAHRLAVRVISLGLLPRATFQDSNMLEVRVLGHKFRNPVGIAAGFDKHGEAVDGLYKLGFGFVEVGSVTPQPQEGNPRPRVFRLPEDQAVINRYGFNSHGLSAVEHRLRARQQKQTQLTTDGLPLGINLGKNKTSVDAAADYVEGVRILGPLADYLVVNVSSPNTAGLRSLQGKTELRRLLSKVLQERDALKGPQKPAVLVKIAPDLTAQDKEDIASVARELGIDGLIITNTTVSRPVGLQGALRSETGGLSGKPLRDLSTQTIREMYALTQGTIPIIGVGGVSSGQDALEKIQAGASLVQLYTALTFLGPPVVARVKRELEALLKERGFNTVTDAIGVDHRR.

A mitochondrion; not cleaved-targeting transit peptide spans 1–10 (MAWRQLRKRA). Residues 1 to 10 (MAWRQLRKRA) are Mitochondrial matrix-facing. The helical transmembrane segment at 11–30 (LDAAIILGGGGLLFTSYLTA) threads the bilayer. Residues 31–395 (TGDDHFYAEY…TDAIGVDHRR (365 aa)) are Mitochondrial intermembrane-facing. FMN is bound by residues 95-99 (AGFDK) and S119. K99 serves as a coordination point for substrate. 144-148 (NRYGF) lines the substrate pocket. FMN is bound by residues N180 and N211. Position 211 to 216 (211 to 216 (NVSSPN)) interacts with substrate. S214 functions as the Nucleophile in the catalytic mechanism. Residues K254 and T282 each coordinate FMN. 283–284 (NT) contacts substrate. Residues G305, G334, and 355–356 (YT) contribute to the FMN site.

The protein belongs to the dihydroorotate dehydrogenase family. Type 2 subfamily. In terms of assembly, monomer. The cofactor is FMN. In terms of processing, the uncleaved transit peptide is required for mitochondrial targeting and proper membrane integration.

It is found in the mitochondrion inner membrane. It catalyses the reaction (S)-dihydroorotate + a quinone = orotate + a quinol. It functions in the pathway pyrimidine metabolism; UMP biosynthesis via de novo pathway; orotate from (S)-dihydroorotate (quinone route): step 1/1. In terms of biological role, catalyzes the conversion of dihydroorotate to orotate with quinone as electron acceptor. Required for UMP biosynthesis via de novo pathway. The protein is Dihydroorotate dehydrogenase (quinone), mitochondrial (Dhodh) of Mus musculus (Mouse).